Reading from the N-terminus, the 225-residue chain is 3-dehydroquinate dehydratase (225 aa).

3-dehydroquinate contacts are provided by residues 30 to 32 (EWR) and arginine 62. Residue histidine 118 is the Proton donor/acceptor of the active site. Lysine 143 serves as the catalytic Schiff-base intermediate with substrate. 3-dehydroquinate-binding residues include arginine 186, serine 205, and glutamine 209.

It belongs to the type-I 3-dehydroquinase family. Homodimer.

It carries out the reaction 3-dehydroquinate = 3-dehydroshikimate + H2O. The protein operates within metabolic intermediate biosynthesis; chorismate biosynthesis; chorismate from D-erythrose 4-phosphate and phosphoenolpyruvate: step 3/7. Involved in the third step of the chorismate pathway, which leads to the biosynthesis of aromatic amino acids. Catalyzes the cis-dehydration of 3-dehydroquinate (DHQ) and introduces the first double bond of the aromatic ring to yield 3-dehydroshikimate. The chain is 3-dehydroquinate dehydratase from Streptococcus thermophilus (strain ATCC BAA-491 / LMD-9).